We begin with the raw amino-acid sequence, 764 residues long: Cyclin-F (764 aa).

The Nuclear localization signal 1 motif lies at 19-27; the sequence is RKRVRKRAS. Residues 28-75 form the F-box domain; sequence AVSLLSLPEELLVFVLQCLSAEDLLSVRAVHSHLCDIIDTNASIWARV. Residues 307 to 404 enclose the Cyclin N-terminal domain; that stretch reads TKRYILVDWL…EVISVLDGKI (98 aa). The short motif at 309–312 is the D box 1 element; that stretch reads RYIL. Positions 570–575 match the Nuclear localization signal 2 motif; the sequence is SSKRRR. Positions 583–738 are PEST; it reads RGAFVATPTA…PSQRIRRQVK (156 aa). Residues 662-754 form a disordered region; it reads CEEDEQEPPT…HSAGEAEQED (93 aa). Low complexity predominate over residues 682 to 692; sequence SSSSTSSSSSS. The span at 702–722 shows a compositional bias: polar residues; sequence SGYSSIQSFPSPTGSSALVSP. Positions 732-742 are enriched in basic residues; the sequence is RIRRQVKRKNT.

The protein belongs to the cyclin family. Cyclin AB subfamily. In terms of assembly, component of the SCF(CCNF) complex. In terms of tissue distribution, expressed in the brain.

Its subcellular location is the nucleus. It localises to the cytoplasm. The protein resides in the perinuclear region. The protein localises to the cytoskeleton. It is found in the microtubule organizing center. Its subcellular location is the centrosome. It localises to the centriole. Its function is as follows. Substrate recognition component of a SCF (SKP1-CUL1-F-box protein) E3 ubiquitin-protein ligase complex which mediates the ubiquitination and subsequent proteasomal degradation of target proteins. The SCF(CCNF) E3 ubiquitin-protein ligase complex is an integral component of the ubiquitin proteasome system (UPS) and links proteasome degradation to the cell cycle. Mediates the substrate recognition and the proteasomal degradation of various target proteins during G2 phase involved in the regulation of cell cycle progression and in the maintenance of genome stability. May play a role in motor neuron development and axonal outgrowth. This chain is Cyclin-F (ccnf), found in Danio rerio (Zebrafish).